Reading from the N-terminus, the 387-residue chain is EARP and GARP complex-interacting protein 1 (387 aa).

Position 1 is an N-acetylmethionine (M1). WD repeat units lie at residues 4–48 (DAPV…IIDF), 55–101 (INKN…VWRM), 124–164 (ELLC…LWDL), 172–214 (VLAS…GWDT), 219–258 (QIYC…FWDT), and 263–302 (EPVK…LSNM). Positions 310–335 (FGHLVDDDDISDQEDHRSEEKSKEPL) are disordered. Residue S320 is modified to Phosphoserine. Residues 322–335 (QEDHRSEEKSKEPL) are compositionally biased toward basic and acidic residues. One copy of the WD 7 repeat lies at 338–379 (NVIATYEEHEDSVYAVDWSSADPWLFASLSYDGRLVINRVPR).

This sequence belongs to the WD repeat EIPR1 family. In terms of assembly, interacts with two multisubunit tethering complexes: EARP composed of VPS50, VPS51, VPS52 and VPS53 subunits and GARP complex composed of VPS51, VPS52, VPS53 and VPS54 subunits. Interacts with SNAP29.

Its subcellular location is the golgi apparatus. The protein resides in the trans-Golgi network. In terms of biological role, acts as a component of endosomal retrieval machinery that is involved in protein transport from early endosomes to either recycling endosomes or the trans-Golgi network. Mediates the recruitment of Golgi-associated retrograde protein (GARP) complex to the trans-Golgi network and controls early endosome-to-Golgi transport of internalized protein. Promotes the recycling of internalized transferrin receptor (TFRC) to the plasma membrane through interaction with endosome-associated recycling protein (EARP) complex. Controls proper insulin distribution and secretion, and retention of cargo in mature dense core vesicles. Required for the stability of the endosome-associated retrograde protein (EARP) complex subunits and for proper localization and association of EARP with membranes. In Homo sapiens (Human), this protein is EARP and GARP complex-interacting protein 1.